A 314-amino-acid polypeptide reads, in one-letter code: Probable RuBisCO transcriptional regulator (314 aa).

The HTH lysR-type domain occupies 6-63; that stretch reads FTLDQLKIIKTIHREGSFKTAAKKLYISQPAVSRQVQNLERQLNTPIFYRDKRKARLT. A DNA-binding region (H-T-H motif) is located at residues 23-42; that stretch reads FKTAAKKLYISQPAVSRQVQ.

The protein belongs to the LysR transcriptional regulatory family.

The protein localises to the plastid. Its subcellular location is the chloroplast. Functionally, trans-acting transcriptional regulator of RuBisCO genes (rbcL and rbcS) expression. This is Probable RuBisCO transcriptional regulator (rbcR) from Emiliania huxleyi (Coccolithophore).